The primary structure comprises 407 residues: MLIRNPFKDKYYSHDRRALNMLALRVPGLAFILMIYIASIVLQFVSGGWSILLLYAFTILIAIFALLHWHSYRWVKKRVILYFAVQGLITFALANLMTGFFILVIIGLYAFLIGQIIGMADRRRTFLILYLLLLLVINSAYHLHKGEVLHFIVIAAPIMIVIITYAATFFAQVDEKIKAQLTLERLELAHQQVEQLTLQNERQRMARDLHDTLAQGLVSLNMQLDAIHVHLAKGNTERAKEIIQQSMKRVKSTIADARSAIDDLRSKSEEIGVLKERITSLMDHFIESTGMACLLDYRLHQVLDVRTAENCYYIIGECMTNAAKHAEAKTIWISIWDDEKGRLHLTVKDNGKGFDVEKGKKKRGHYGLLGIQERVRAINGQFNIKSTKLKGTQIEITVPIQGEMQDE.

Over 1 to 25 (MLIRNPFKDKYYSHDRRALNMLALR) the chain is Cytoplasmic. Helical transmembrane passes span 26–46 (VPGLAFILMIYIASIVLQFVS) and 47–67 (GGWSILLLYAFTILIAIFALL). Residues 68–78 (HWHSYRWVKKR) lie on the Cytoplasmic side of the membrane. A run of 2 helical transmembrane segments spans residues 79-99 (VILYFAVQGLITFALANLMTG) and 100-120 (FFILVIIGLYAFLIGQIIGMA). The Cytoplasmic segment spans residues 121–125 (DRRRT). Residues 126–146 (FLILYLLLLLVINSAYHLHKG) traverse the membrane as a helical segment. At 147–150 (EVLH) the chain is on the extracellular side. Residues 151 to 171 (FIVIAAPIMIVIITYAATFFA) traverse the membrane as a helical segment. The Cytoplasmic portion of the chain corresponds to 172–407 (QVDEKIKAQL…VPIQGEMQDE (236 aa)). A Histidine kinase domain is found at 201-402 (ERQRMARDLH…QIEITVPIQG (202 aa)). Phosphohistidine; by autocatalysis is present on H210.

The protein localises to the cell membrane. It carries out the reaction ATP + protein L-histidine = ADP + protein N-phospho-L-histidine.. Its function is as follows. Member of the two-component regulatory system YdfH/YdfI. May activate YdfI by phosphorylation. This chain is Sensor histidine kinase YdfH (ydfH), found in Bacillus subtilis (strain 168).